The following is a 110-amino-acid chain: Keratin-associated protein 6-3 (110 aa).

Belongs to the KRTAP type 6 family. In terms of assembly, interacts with hair keratins.

In terms of biological role, in the hair cortex, hair keratin intermediate filaments are embedded in an interfilamentous matrix, consisting of hair keratin-associated proteins (KRTAP), which are essential for the formation of a rigid and resistant hair shaft through their extensive disulfide bond cross-linking with abundant cysteine residues of hair keratins. The matrix proteins include the high-sulfur and high-glycine-tyrosine keratins. This chain is Keratin-associated protein 6-3, found in Homo sapiens (Human).